A 153-amino-acid chain; its full sequence is uncharacterized protein (153 aa).

A run of 2 helical transmembrane segments spans residues 1–21 and 106–126; these read MAAT…LFFS and IVPI…TVYI.

Its subcellular location is the membrane. This is an uncharacterized protein from Saccharomyces cerevisiae (strain ATCC 204508 / S288c) (Baker's yeast).